A 608-amino-acid polypeptide reads, in one-letter code: Albumin (608 aa).

A signal peptide spans 1–18; that stretch reads MKWVTFISLFFLFSSAYS. A propeptide spanning residues 19-24 is cleaved from the precursor; it reads RGLVRR. 3 consecutive Albumin domains span residues 19–210, 211–403, and 404–601; these read RGLV…EALR, EKVL…EFKP, and LVDE…KLVA. Residue Ser29 is modified to Phosphoserine. Glu30 and Asp37 together coordinate Ca(2+). A disulfide bridge links Cys77 with Cys86. Phosphoserine occurs at positions 82 and 89. Zn(2+) is bound at residue His91. 6 disulfides stabilise this stretch: Cys99-Cys115, Cys114-Cys125, Cys148-Cys193, Cys192-Cys201, Cys224-Cys270, and Cys269-Cys277. Lys229 carries the post-translational modification N6-succinyllysine. Glu268 contributes to the Ca(2+) binding site. The Zn(2+) site is built by His271 and Asp273. Ca(2+) contacts are provided by Asp273, Glu276, Asp279, and Asp283. Cystine bridges form between Cys289/Cys303, Cys302/Cys313, Cys340/Cys385, Cys384/Cys393, Cys416/Cys462, Cys461/Cys472, Cys485/Cys501, and Cys500/Cys511. The residue at position 443 (Ser443) is a Phosphoserine. Phosphothreonine is present on residues Thr444 and Thr446. N6-succinyllysine is present on Lys460. The residue at position 513 (Ser513) is a Phosphoserine. 2 disulfide bridges follow: Cys538-Cys583 and Cys582-Cys591. Residue Lys558 is modified to N6-methyllysine. Thr570 bears the Phosphothreonine mark. Lys588 is subject to N6-succinyllysine.

This sequence belongs to the ALB/AFP/VDB family. In terms of assembly, interacts with FCGRT; this interaction regulates ALB homeostasis. Interacts with TASOR. In plasma, occurs in a covalently-linked complex with chromophore-bound alpha-1-microglobulin; this interaction does not prevent fatty acid binding to ALB. Phosphorylated by FAM20C in the extracellular medium. In terms of tissue distribution, plasma.

The protein resides in the secreted. Functionally, binds water, Ca(2+), Na(+), K(+), fatty acids, hormones, bilirubin and drugs. Its main function is the regulation of the colloidal osmotic pressure of blood. Major zinc transporter in plasma, typically binds about 80% of all plasma zinc. Major calcium and magnesium transporter in plasma, binds approximately 45% of circulating calcium and magnesium in plasma. Potentially has more than two calcium-binding sites and might additionally bind calcium in a non-specific manner. The shared binding site between zinc and calcium at residue Asp-273 suggests a crosstalk between zinc and calcium transport in the blood. The rank order of affinity is zinc &gt; calcium &gt; magnesium. Binds to the bacterial siderophore enterobactin and inhibits enterobactin-mediated iron uptake of E.coli from ferric transferrin, and may thereby limit the utilization of iron and growth of enteric bacteria such as E.coli. Does not prevent iron uptake by the bacterial siderophore aerobactin. This chain is Albumin (ALB), found in Canis lupus familiaris (Dog).